The chain runs to 214 residues: Somatotropin-A (214 aa).

A signal peptide spans 1–25 (MATGFCSSFGLLVVLLLKNVADVGA). Cystine bridges form between Cys-77–Cys-187 and Cys-204–Cys-212.

Belongs to the somatotropin/prolactin family.

Its subcellular location is the secreted. Its function is as follows. Growth hormone plays an important role in growth control. The polypeptide is Somatotropin-A (gh-a) (Xenopus laevis (African clawed frog)).